The following is a 188-amino-acid chain: Protein GrpE 2 (188 aa).

This sequence belongs to the GrpE family. In terms of assembly, homodimer.

Its subcellular location is the cytoplasm. Participates actively in the response to hyperosmotic and heat shock by preventing the aggregation of stress-denatured proteins, in association with DnaK and GrpE. It is the nucleotide exchange factor for DnaK and may function as a thermosensor. Unfolded proteins bind initially to DnaJ; upon interaction with the DnaJ-bound protein, DnaK hydrolyzes its bound ATP, resulting in the formation of a stable complex. GrpE releases ADP from DnaK; ATP binding to DnaK triggers the release of the substrate protein, thus completing the reaction cycle. Several rounds of ATP-dependent interactions between DnaJ, DnaK and GrpE are required for fully efficient folding. The chain is Protein GrpE 2 from Buchnera aphidicola subsp. Acyrthosiphon pisum (strain APS) (Acyrthosiphon pisum symbiotic bacterium).